A 643-amino-acid chain; its full sequence is Probable extracellular metalloproteinase 4 (643 aa).

The N-terminal stretch at 1-18 is a signal peptide; it reads MHGLLLAGLLALPLNVLA. Positions 19-254 are excised as a propeptide; that stretch reads HPTESHSSGV…VHSVVDYVSA (236 aa). Basic and acidic residues predominate over residues 47 to 57; it reads TKSDAVPKQDG. The interval 47 to 69 is disordered; the sequence is TKSDAVPKQDGESFTTSSTGDDN. Residues 58-69 are compositionally biased toward polar residues; sequence ESFTTSSTGDDN. Asn-271 and Asn-420 each carry an N-linked (GlcNAc...) asparagine glycan. His-437 lines the Zn(2+) pocket. Glu-438 is a catalytic residue. Residue His-441 participates in Zn(2+) binding. N-linked (GlcNAc...) asparagine glycosylation is found at Asn-603 and Asn-629.

It belongs to the peptidase M36 family. It depends on Zn(2+) as a cofactor.

It localises to the secreted. Its function is as follows. Secreted metalloproteinase probably acting as a virulence factor. The polypeptide is Probable extracellular metalloproteinase 4 (MEP4) (Arthroderma benhamiae (strain ATCC MYA-4681 / CBS 112371) (Trichophyton mentagrophytes)).